The primary structure comprises 348 residues: Glycerol-1-phosphate dehydrogenase [NAD(P)+] (348 aa).

Residues 94–98 (GKVID) and T116 contribute to the NAD(+) site. D121 provides a ligand contact to substrate. Residue S125 coordinates NAD(+). D168 contacts substrate. Residues D168 and H248 each contribute to the Zn(2+) site. H252 lines the substrate pocket. H264 provides a ligand contact to Zn(2+).

The protein belongs to the glycerol-1-phosphate dehydrogenase family. Homooctamer. Requires Zn(2+) as cofactor.

The protein localises to the cytoplasm. It catalyses the reaction sn-glycerol 1-phosphate + NAD(+) = dihydroxyacetone phosphate + NADH + H(+). It carries out the reaction sn-glycerol 1-phosphate + NADP(+) = dihydroxyacetone phosphate + NADPH + H(+). Its pathway is membrane lipid metabolism; glycerophospholipid metabolism. In terms of biological role, catalyzes the NAD(P)H-dependent reduction of dihydroxyacetonephosphate (DHAP or glycerone phosphate) to glycerol 1-phosphate (G1P). The G1P thus generated is used as the glycerophosphate backbone of phospholipids in the cellular membranes of Archaea. This Methanosphaera stadtmanae (strain ATCC 43021 / DSM 3091 / JCM 11832 / MCB-3) protein is Glycerol-1-phosphate dehydrogenase [NAD(P)+].